Here is a 680-residue protein sequence, read N- to C-terminus: DNA ligase (680 aa).

NAD(+) is bound by residues 32 to 36 (DAVYD), 81 to 82 (SL), and Glu115. Lys117 functions as the N6-AMP-lysine intermediate in the catalytic mechanism. Residues Arg138, Glu175, Lys291, and Lys315 each contribute to the NAD(+) site. Residues Cys409, Cys412, Cys427, and Cys432 each contribute to the Zn(2+) site. The BRCT domain maps to 600-680 (ASEQHLKGLT…RLQAMLKDSP (81 aa)).

This sequence belongs to the NAD-dependent DNA ligase family. LigA subfamily. The cofactor is Mg(2+). Requires Mn(2+) as cofactor.

It catalyses the reaction NAD(+) + (deoxyribonucleotide)n-3'-hydroxyl + 5'-phospho-(deoxyribonucleotide)m = (deoxyribonucleotide)n+m + AMP + beta-nicotinamide D-nucleotide.. DNA ligase that catalyzes the formation of phosphodiester linkages between 5'-phosphoryl and 3'-hydroxyl groups in double-stranded DNA using NAD as a coenzyme and as the energy source for the reaction. It is essential for DNA replication and repair of damaged DNA. The protein is DNA ligase of Synechococcus sp. (strain CC9902).